The chain runs to 274 residues: Thymidylate synthase (274 aa).

Arg21 is a dUMP binding site. Position 51 (His51) interacts with (6R)-5,10-methylene-5,6,7,8-tetrahydrofolate. 123–124 contacts dUMP; that stretch reads RR. Catalysis depends on Cys156, which acts as the Nucleophile. DUMP is bound by residues 176–179, Asn187, and 217–219; these read RSAD and HIY. Residue Asp179 participates in (6R)-5,10-methylene-5,6,7,8-tetrahydrofolate binding. Residue Ala273 coordinates (6R)-5,10-methylene-5,6,7,8-tetrahydrofolate.

Belongs to the thymidylate synthase family. Bacterial-type ThyA subfamily. As to quaternary structure, homodimer.

The protein resides in the cytoplasm. It catalyses the reaction dUMP + (6R)-5,10-methylene-5,6,7,8-tetrahydrofolate = 7,8-dihydrofolate + dTMP. It functions in the pathway pyrimidine metabolism; dTTP biosynthesis. Functionally, catalyzes the reductive methylation of 2'-deoxyuridine-5'-monophosphate (dUMP) to 2'-deoxythymidine-5'-monophosphate (dTMP) while utilizing 5,10-methylenetetrahydrofolate (mTHF) as the methyl donor and reductant in the reaction, yielding dihydrofolate (DHF) as a by-product. This enzymatic reaction provides an intracellular de novo source of dTMP, an essential precursor for DNA biosynthesis. The polypeptide is Thymidylate synthase (Christiangramia forsetii (strain DSM 17595 / CGMCC 1.15422 / KT0803) (Gramella forsetii)).